A 440-amino-acid polypeptide reads, in one-letter code: Cytochrome c biogenesis protein Ccs1 (440 aa).

Transmembrane regions (helical) follow at residues 25–45, 84–104, and 170–190; these read LQFS…GTVI, TWWF…CSIS, and LAPI…VLGL.

Belongs to the Ccs1/CcsB family. As to quaternary structure, may interact with CcsA.

Its subcellular location is the plastid. The protein localises to the chloroplast thylakoid membrane. Functionally, required during biogenesis of c-type cytochromes (cytochrome c6 and cytochrome f) at the step of heme attachment. This chain is Cytochrome c biogenesis protein Ccs1, found in Pyropia yezoensis (Susabi-nori).